Consider the following 132-residue polypeptide: Putative RNase AF_0947 (132 aa).

Active-site residues include arginine 91 and histidine 96. An RX(4)HXY motif motif is present at residues arginine 91–tyrosine 98. Tyrosine 98 is subject to O-di-AMP-tyrosine.

This sequence belongs to the HepT RNase toxin family. Homodimer, probably forms a complex with cognate antitoxin AF_0948. Modified by cognate antitoxin AF_0948; probably at least 2 successive AMPylation events occur on Tyr-98.

Its function is as follows. Probable toxic component of a putative type VII toxin-antitoxin (TA) system, probably an RNase. Probably neutralized by cognate antitoxin AF_0948. Neutralization may be due to AMPylation by AF_0948. This chain is Putative RNase AF_0947, found in Archaeoglobus fulgidus (strain ATCC 49558 / DSM 4304 / JCM 9628 / NBRC 100126 / VC-16).